The chain runs to 310 residues: Ribosomal RNA small subunit methyltransferase H (310 aa).

S-adenosyl-L-methionine is bound by residues 32 to 34 (GGH), aspartate 52, phenylalanine 79, aspartate 100, and glutamine 107.

Belongs to the methyltransferase superfamily. RsmH family.

It localises to the cytoplasm. It carries out the reaction cytidine(1402) in 16S rRNA + S-adenosyl-L-methionine = N(4)-methylcytidine(1402) in 16S rRNA + S-adenosyl-L-homocysteine + H(+). Its function is as follows. Specifically methylates the N4 position of cytidine in position 1402 (C1402) of 16S rRNA. This is Ribosomal RNA small subunit methyltransferase H from Bacillus cereus (strain B4264).